The chain runs to 539 residues: Phosphoenolpyruvate carboxykinase (ATP) (539 aa).

Positions 61, 195, and 201 each coordinate substrate. Residues Lys201, His220, and 238–246 (GLSGTGKTT) each bind ATP. Residues Lys201 and His220 each contribute to the Mn(2+) site. Mn(2+) is bound at residue Asp259. Residues Glu287, Arg325, and Thr450 each coordinate ATP. Arg325 lines the substrate pocket.

Belongs to the phosphoenolpyruvate carboxykinase (ATP) family. Mn(2+) is required as a cofactor.

The protein localises to the cytoplasm. It carries out the reaction oxaloacetate + ATP = phosphoenolpyruvate + ADP + CO2. The protein operates within carbohydrate biosynthesis; gluconeogenesis. In terms of biological role, involved in the gluconeogenesis. Catalyzes the conversion of oxaloacetate (OAA) to phosphoenolpyruvate (PEP) through direct phosphoryl transfer between the nucleoside triphosphate and OAA. The sequence is that of Phosphoenolpyruvate carboxykinase (ATP) from Methylorubrum populi (strain ATCC BAA-705 / NCIMB 13946 / BJ001) (Methylobacterium populi).